The sequence spans 420 residues: Acyl-coenzyme A amino acid N-acyltransferase 2 (420 aa).

Catalysis depends on charge relay system residues serine 235, aspartate 329, and histidine 363. Positions serine 418–leucine 420 match the Microbody targeting signal motif.

This sequence belongs to the C/M/P thioester hydrolase family.

Its subcellular location is the peroxisome. In terms of biological role, acyltransferase which efficiently conjugates very long-chain and long-chain fatty acids to taurine. Shows no conjugation activity in the presence of glycine. The protein is Acyl-coenzyme A amino acid N-acyltransferase 2 of Mus musculus (Mouse).